Here is a 969-residue protein sequence, read N- to C-terminus: RNA polymerase-associated protein RapA (969 aa).

A Helicase ATP-binding domain is found at 164-334; it reads EVGRRHAPRV…FARLRLLDPD (171 aa). 177-184 contributes to the ATP binding site; it reads DEVGLGKT. A DEAH box motif is present at residues 280–283; that stretch reads DEAH. The region spanning 492–679 is the Helicase C-terminal domain; it reads RVNWLIEKIQ…ESAKLNQSLK (188 aa).

Belongs to the SNF2/RAD54 helicase family. RapA subfamily. As to quaternary structure, interacts with the RNAP. Has a higher affinity for the core RNAP than for the holoenzyme. Its ATPase activity is stimulated by binding to RNAP.

Functionally, transcription regulator that activates transcription by stimulating RNA polymerase (RNAP) recycling in case of stress conditions such as supercoiled DNA or high salt concentrations. Probably acts by releasing the RNAP, when it is trapped or immobilized on tightly supercoiled DNA. Does not activate transcription on linear DNA. Probably not involved in DNA repair. This is RNA polymerase-associated protein RapA from Vibrio atlanticus (strain LGP32) (Vibrio splendidus (strain Mel32)).